A 1144-amino-acid chain; its full sequence is Adenylate cyclase type 3 (1144 aa).

Over 1-79 (MTEDQGFSDP…FKRQRHETLL (79 aa)) the chain is Cytoplasmic. Transmembrane regions (helical) follow at residues 80–100 (VLVV…AVVF), 105–125 (LAPL…FVLC), 139–159 (VPYL…GLNF), 173–193 (AFFV…IVII), and 226–246 (ILAN…SYYM). Mg(2+)-binding residues include Asp324, Ile325, and Asp368. Residues 324 to 329 (DIVGFT) and 366 to 368 (LGD) each bind ATP. The chain crosses the membrane as a helical span at residues 381 to 401 (EDHAVCSILMGLAMVEAISYV). The Cytoplasmic portion of the chain corresponds to 402 to 630 (REKTKTGVDM…RYSVEKEKQS (229 aa)). Arg412 is a binding site for ATP. Lys465 participates in a covalent cross-link: Glycyl lysine isopeptide (Lys-Gly) (interchain with G-Cter in SUMO3). Residues 504 to 563 (QNGLNGSALPNGAPASKPSSPALIETKEPNGSAHASGSTSEEAEEQEAQADNPSFPNPRR) are disordered. At Ser523 the chain carries Phosphoserine. The segment covering 534–543 (GSAHASGSTS) has biased composition (low complexity). A Phosphoserine modification is found at Ser578. 3 helical membrane passes run 631–651 (GAAF…EILI), 662–682 (FVVG…AIFP), and 706–726 (WAML…LSCL). An N-linked (GlcNAc...) asparagine glycan is attached at Asn734. A run of 3 helical transmembrane segments spans residues 755 to 775 (VAVL…MVKL), 777 to 797 (LMLL…CPVF), and 833 to 853 (LPLV…MLSF). At 854–1144 (YYFSRHVEKL…TLPHQVVDNP (291 aa)) the chain is on the cytoplasmic side. Residues Lys975, 1062-1064 (DIW), and 1069-1073 (NVASR) each bind ATP. Ser1076 is subject to Phosphoserine; by CaMK2. Residue Lys1109 coordinates ATP.

The protein belongs to the adenylyl cyclase class-4/guanylyl cyclase family. It depends on Mg(2+) as a cofactor. Mn(2+) is required as a cofactor. Post-translationally, N-glycosylated. In terms of processing, sumoylated. Sumoylation is required for targeting ot olfactory cilia. Rapidly phosphorylated after stimulation by odorants or forskolin. Phosphorylation by CaMK2 at Ser-1076 down-regulates enzyme activity. As to expression, detected on cilia on the olfactory epithelium (at protein level). Detected on cilia on the olfactory epithelium.

It is found in the cell membrane. The protein localises to the golgi apparatus. It localises to the cell projection. Its subcellular location is the cilium. The protein resides in the cytoplasm. It carries out the reaction ATP = 3',5'-cyclic AMP + diphosphate. Its activity is regulated as follows. Specifically activated by the G alpha protein GNAL/G(olf) in signaling cascades triggered by odorant receptors. Activated by forskolin. After forskolin treatment, activity is further increased by calcium/calmodulin. In the absence of forskolin, calcium/calmodulin has little effect on enzyme activity. Catalyzes the formation of the signaling molecule cAMP in response to G-protein signaling. Participates in signaling cascades triggered by odorant receptors via its function in cAMP biosynthesis: specifically activated by G alpha protein GNAL/G(olf) in olfactory epithelium. Required for the perception of odorants. Required for normal sperm motility and normal male fertility. Plays a role in regulating insulin levels and body fat accumulation in response to a high fat diet. In Rattus norvegicus (Rat), this protein is Adenylate cyclase type 3.